The following is a 257-amino-acid chain: Global transcriptional regulator CodY (257 aa).

Positions 1–155 (MSLLSKTREL…AATVIGMEIL (155 aa)) are GAF domain. 6 residues coordinate GTP: Val-22, Phe-24, Ser-43, Arg-44, Arg-45, and Lys-47. Residues Arg-61, Thr-96, and Phe-98 each contribute to the L-isoleucine site. Glu-153 and Lys-158 together coordinate GTP. The segment at residues 203–222 (ASKVADRVGITRSVIVNALR) is a DNA-binding region (H-T-H motif).

It belongs to the CodY family. Homodimer. Homotetramer. May form homodimers under conditions in which energy sources are sufficient (active state) and homotetramers under insufficient nutrient conditions (inactive state).

The protein localises to the cytoplasm. With respect to regulation, activity of CodY is modulated by interaction with two types of effectors: the branched-chain amino acids (BCAAs) leucine, isoleucine and valine, which are signals of the nutritional status of the cell, and GTP, which may signal the energetic status of the cell. DNA-binding global transcriptional regulator which is involved in the adaptive response to starvation and acts by directly or indirectly controlling the expression of numerous genes in response to nutrient availability. During rapid exponential growth, CodY is highly active and represses genes whose products allow adaptation to nutrient depletion. The chain is Global transcriptional regulator CodY from Staphylococcus aureus (strain Mu3 / ATCC 700698).